A 221-amino-acid chain; its full sequence is FMN-dependent NADH:quinone oxidoreductase 1 (221 aa).

Residues 17–19 (SAS) and 148–151 (SSGG) each bind FMN.

Belongs to the azoreductase type 1 family. Homodimer. FMN is required as a cofactor.

The catalysed reaction is 2 a quinone + NADH + H(+) = 2 a 1,4-benzosemiquinone + NAD(+). It catalyses the reaction N,N-dimethyl-1,4-phenylenediamine + anthranilate + 2 NAD(+) = 2-(4-dimethylaminophenyl)diazenylbenzoate + 2 NADH + 2 H(+). Quinone reductase that provides resistance to thiol-specific stress caused by electrophilic quinones. In terms of biological role, also exhibits azoreductase activity. Catalyzes the reductive cleavage of the azo bond in aromatic azo compounds to the corresponding amines. In Clostridium acetobutylicum (strain ATCC 824 / DSM 792 / JCM 1419 / IAM 19013 / LMG 5710 / NBRC 13948 / NRRL B-527 / VKM B-1787 / 2291 / W), this protein is FMN-dependent NADH:quinone oxidoreductase 1.